Consider the following 378-residue polypeptide: Ribosomal RNA large subunit methyltransferase G (378 aa).

The protein belongs to the methyltransferase superfamily. RlmG family.

Its subcellular location is the cytoplasm. It catalyses the reaction guanosine(1835) in 23S rRNA + S-adenosyl-L-methionine = N(2)-methylguanosine(1835) in 23S rRNA + S-adenosyl-L-homocysteine + H(+). In terms of biological role, specifically methylates the guanine in position 1835 (m2G1835) of 23S rRNA. In Salmonella gallinarum (strain 287/91 / NCTC 13346), this protein is Ribosomal RNA large subunit methyltransferase G.